A 244-amino-acid chain; its full sequence is DNA repair protein RecO (244 aa).

Belongs to the RecO family.

Functionally, involved in DNA repair and RecF pathway recombination. This chain is DNA repair protein RecO, found in Ehrlichia chaffeensis (strain ATCC CRL-10679 / Arkansas).